Consider the following 203-residue polypeptide: Small ribosomal subunit protein uS4 (203 aa).

In terms of domain architecture, S4 RNA-binding spans 93-153 (QRLDSLVYRL…DKSKNIVPIQ (61 aa)).

Belongs to the universal ribosomal protein uS4 family. As to quaternary structure, part of the 30S ribosomal subunit. Contacts protein S5. The interaction surface between S4 and S5 is involved in control of translational fidelity.

Its function is as follows. One of the primary rRNA binding proteins, it binds directly to 16S rRNA where it nucleates assembly of the body of the 30S subunit. In terms of biological role, with S5 and S12 plays an important role in translational accuracy. This chain is Small ribosomal subunit protein uS4, found in Leuconostoc citreum (strain KM20).